We begin with the raw amino-acid sequence, 414 residues long: Arrestin domain-containing protein 3 (414 aa).

Short sequence motifs (PPxY motif) lie at residues 346–349 and 391–394; these read PPSY and PPLY. Residues 393–414 form a disordered region; that stretch reads LYSEIDPNPDQPADDRPSCPSR. The span at 405 to 414 shows a compositional bias: basic and acidic residues; that stretch reads ADDRPSCPSR.

This sequence belongs to the arrestin family. In terms of assembly, interacts (via PPxY motifs) with NEDD4 (via WW domains). Interacts with ADRB2. Interacts with ADRB3. Interacts with HGS (via PPxY motifs). Does not bind TXN (thioredoxin). Interacts with ITCH.

Its subcellular location is the cytoplasm. The protein localises to the cell membrane. The protein resides in the lysosome. It is found in the endosome. It localises to the early endosome. Functionally, adapter protein that plays a role in regulating cell-surface expression of adrenergic receptors and probably also other G protein-coupled receptors. Plays a role in NEDD4-mediated ubiquitination and endocytosis af activated ADRB2 and subsequent ADRB2 degradation. May recruit NEDD4 to ADRB2. Alternatively, may function as adapter protein that does not play a major role in recruiting NEDD4 to ADRB2, but rather plays a role in a targeting ADRB2 to endosomes. The sequence is that of Arrestin domain-containing protein 3 (ARRDC3) from Bos taurus (Bovine).